A 224-amino-acid polypeptide reads, in one-letter code: Late embryogenesis abundant protein, group 3 (224 aa).

Disordered stretches follow at residues 1–169 and 193–224; these read MASN…KDKT and NTLG…TRNH. Residues 13–23 show a composition bias toward basic and acidic residues; that stretch reads GETKARNEEKT. Repeat copies occupy residues 26 to 36, 37 to 47, 48 to 58, 59 to 69, and 70 to 80. Residues 26–153 form a 12 X 11 AA tandem repeats region; that stretch reads VMGATKDKAG…TEAAKQKASE (128 aa). Basic and acidic residues-rich tracts occupy residues 41-85, 92-109, and 120-151; these read TKQK…KDKT, AKEK…RAAQ, and EKTE…KQKA. Residues 81 to 87 form a 6; truncated repeat; sequence AKDKTAQ. Tandem repeats lie at residues 88–98, 99–109, 121–131, 132–142, and 143–153. Residues 200–224 show a composition bias toward low complexity; it reads DNTITTKDNTTGATTKDTTTTTRNH.

This sequence belongs to the LEA type 4 family.

This Triticum aestivum (Wheat) protein is Late embryogenesis abundant protein, group 3.